The chain runs to 251 residues: tRNA (guanine-N(7)-)-methyltransferase (251 aa).

Residues Glu-80, Glu-105, Asp-132, and Asp-155 each coordinate S-adenosyl-L-methionine. Asp-155 is a catalytic residue. Substrate contacts are provided by residues Lys-159, Asp-191, and 228 to 231 (TKFE).

Belongs to the class I-like SAM-binding methyltransferase superfamily. TrmB family.

The enzyme catalyses guanosine(46) in tRNA + S-adenosyl-L-methionine = N(7)-methylguanosine(46) in tRNA + S-adenosyl-L-homocysteine. It functions in the pathway tRNA modification; N(7)-methylguanine-tRNA biosynthesis. Functionally, catalyzes the formation of N(7)-methylguanine at position 46 (m7G46) in tRNA. This is tRNA (guanine-N(7)-)-methyltransferase from Histophilus somni (strain 129Pt) (Haemophilus somnus).